The following is a 196-amino-acid chain: Large ribosomal subunit protein eL15 (196 aa).

The tract at residues 156–196 (HRGRAERGKTSAGRKGRGMRTRGRGTEKTRPSIRSHANQGK) is disordered. Positions 167–178 (AGRKGRGMRTRG) are enriched in basic residues.

This sequence belongs to the eukaryotic ribosomal protein eL15 family.

This chain is Large ribosomal subunit protein eL15, found in Methanoregula boonei (strain DSM 21154 / JCM 14090 / 6A8).